A 204-amino-acid chain; its full sequence is FMN-dependent NADH:quinone oxidoreductase (204 aa).

Ser9 is a binding site for FMN.

The protein belongs to the azoreductase type 1 family. In terms of assembly, homodimer. It depends on FMN as a cofactor.

It carries out the reaction 2 a quinone + NADH + H(+) = 2 a 1,4-benzosemiquinone + NAD(+). It catalyses the reaction N,N-dimethyl-1,4-phenylenediamine + anthranilate + 2 NAD(+) = 2-(4-dimethylaminophenyl)diazenylbenzoate + 2 NADH + 2 H(+). In terms of biological role, quinone reductase that provides resistance to thiol-specific stress caused by electrophilic quinones. Its function is as follows. Also exhibits azoreductase activity. Catalyzes the reductive cleavage of the azo bond in aromatic azo compounds to the corresponding amines. This Thiobacillus denitrificans (strain ATCC 25259 / T1) protein is FMN-dependent NADH:quinone oxidoreductase.